We begin with the raw amino-acid sequence, 235 residues long: Protein mxl-3 (235 aa).

Residues 18–49 form a disordered region; the sequence is EKQFRKRHHSDSSDDDSSSPKSASPSMDDDRR. The tract at residues 47–60 is basic motif; the sequence is DRRAHHNELERRRR. The 52-residue stretch at 47–98 folds into the bHLH domain; that stretch reads DRRAHHNELERRRRDHIKDHFTILKDAIPLLDGEKSSRALILKRAVEFIHVM. Residues 61-98 form a helix-loop-helix motif region; that stretch reads DHIKDHFTILKDAIPLLDGEKSSRALILKRAVEFIHVM.

Belongs to the MAX family. As to quaternary structure, may form homodimer. Interacts (via N-terminus) with skn-1 isoforms a and c. Expressed in the intestine and in the AWC sensory neurons.

It localises to the nucleus. It is found in the cytoplasm. In terms of biological role, transcription factor which regulates the expression of genes involved in lipid metabolism in response to nutrient availability. Binds to the E-box motif 5'-CACGTG-3'. Under well-fed conditions, binds to the promoter and represses the expression of lipase genes lipl-1, lipl-2, lipl-3 and to a lesser extent lipl-5, thereby preventing lipolysis. In response to a high-glucose diet, promotes fatty acid synthesis, elongation and desaturation by up-regulating transcription factor sbp-1 expression. Under well-fed conditions, acts remotely in the intestine to up-regulate the expression of chemoreceptor srh-234 gene in the ADL sensory neuron, possibly by regulating the insulin signaling pathway. The sequence is that of Protein mxl-3 from Caenorhabditis elegans.